The following is a 524-amino-acid chain: Alkaline phosphatase, tissue-nonspecific isozyme (524 aa).

Residues 1–17 (MILPFLVLAIGTCLTNS) form the signal peptide. Mg(2+) is bound at residue D60. The Zn(2+) site is built by D60 and S110. The active-site Phosphoserine intermediate is the S110. S110 bears the Phosphoserine mark. A disulfide bridge connects residues C139 and C201. N140 carries an N-linked (GlcNAc...) asparagine glycan. T173 contacts Mg(2+). N230 carries an N-linked (GlcNAc...) asparagine glycan. E235 contributes to the Ca(2+) binding site. An N-linked (GlcNAc...) asparagine glycan is attached at N271. Ca(2+) is bound by residues F290 and E291. N303 carries an N-linked (GlcNAc...) asparagine glycan. Residue D306 coordinates Ca(2+). Position 332 (E332) interacts with Mg(2+). The Zn(2+) site is built by D337, H341, D378, and H379. N430 is a glycosylation site (N-linked (GlcNAc...) asparagine). H454 is a Zn(2+) binding site. The cysteines at positions 489 and 497 are disulfide-linked. The GPI-anchor amidated serine moiety is linked to residue S501. The propeptide at 502-524 (SASSPSPGALLLPLALFPLRTLF) is removed in mature form.

Belongs to the alkaline phosphatase family. Homodimer. The cofactor is Mg(2+). Zn(2+) serves as cofactor. Requires Ca(2+) as cofactor. Post-translationally, N-glycosylated.

It localises to the cell membrane. The protein localises to the extracellular vesicle membrane. Its subcellular location is the mitochondrion membrane. The protein resides in the mitochondrion intermembrane space. The enzyme catalyses a phosphate monoester + H2O = an alcohol + phosphate. It carries out the reaction diphosphate + H2O = 2 phosphate + H(+). It catalyses the reaction pyridoxal 5'-phosphate + H2O = pyridoxal + phosphate. The catalysed reaction is phosphoethanolamine + H2O = ethanolamine + phosphate. The enzyme catalyses N-phosphocreatine + H2O = creatine + phosphate. It carries out the reaction ATP + H2O = ADP + phosphate + H(+). It catalyses the reaction ADP + H2O = AMP + phosphate + H(+). The catalysed reaction is AMP + H2O = adenosine + phosphate. Phosphatase activity is specifically inhibited by 5-((5-chloro-2-methoxyphenyl)sulfonamido)nicotinamide (SBI-425). Functionally, alkaline phosphatase that metabolizes various phosphate compounds and plays a key role in skeletal mineralization and adaptive thermogenesis. Has broad substrate specificity and can hydrolyze a considerable variety of compounds: however, only a few substrates, such as diphosphate (inorganic pyrophosphate; PPi), pyridoxal 5'-phosphate (PLP) and N-phosphocreatine are natural substrates. Plays an essential role in skeletal and dental mineralization via its ability to hydrolyze extracellular diphosphate, a potent mineralization inhibitor, to phosphate: it thereby promotes hydroxyapatite crystal formation and increases inorganic phosphate concentration. Acts in a non-redundant manner with PHOSPHO1 in skeletal mineralization: while PHOSPHO1 mediates the initiation of hydroxyapatite crystallization in the matrix vesicles (MVs), ALPL/TNAP catalyzes the spread of hydroxyapatite crystallization in the extracellular matrix. Also promotes dephosphorylation of osteopontin (SSP1), an inhibitor of hydroxyapatite crystallization in its phosphorylated state; it is however unclear whether ALPL/TNAP mediates SSP1 dephosphorylation via a direct or indirect manner. Catalyzes dephosphorylation of PLP to pyridoxal (PL), the transportable form of vitamin B6, in order to provide a sufficient amount of PLP in the brain, an essential cofactor for enzymes catalyzing the synthesis of diverse neurotransmitters. Additionally, also able to mediate ATP degradation in a stepwise manner to adenosine, thereby regulating the availability of ligands for purinergic receptors. Also capable of dephosphorylating microbial products, such as lipopolysaccharides (LPS) as well as other phosphorylated small-molecules, such as poly-inosine:cytosine (poly I:C). Acts as a key regulator of adaptive thermogenesis as part of the futile creatine cycle: localizes to the mitochondria of thermogenic fat cells and acts by mediating hydrolysis of N-phosphocreatine to initiate a futile cycle of creatine dephosphorylation and phosphorylation. During the futile creatine cycle, creatine and N-phosphocreatine are in a futile cycle, which dissipates the high energy charge of N-phosphocreatine as heat without performing any mechanical or chemical work. This Rattus norvegicus (Rat) protein is Alkaline phosphatase, tissue-nonspecific isozyme (Alpl).